Reading from the N-terminus, the 570-residue chain is Laccase-3 (570 aa).

Positions 1–25 (MESFRRFSLLSFIALLAYFAFLASA) are cleaved as a signal peptide. 2 Plastocyanin-like domains span residues 33 to 149 (VITP…PRLG) and 159 to 310 (RDIP…YVNA). Asn-79 carries N-linked (GlcNAc...) asparagine glycosylation. 4 residues coordinate Cu cation: His-83, His-85, His-128, and His-130. N-linked (GlcNAc...) asparagine glycosylation is found at Asn-188, Asn-298, Asn-332, Asn-383, Asn-393, and Asn-433. A Plastocyanin-like 3 domain is found at 419–554 (DFPPVPPVQF…AMVFLVENGR (136 aa)). Residues His-471, His-474, His-476, His-533, Cys-534, His-535, and His-539 each contribute to the Cu cation site.

The protein belongs to the multicopper oxidase family. Requires Cu cation as cofactor. Mostly expressed in roots and siliques.

Its subcellular location is the secreted. The protein resides in the extracellular space. The protein localises to the apoplast. The enzyme catalyses 4 hydroquinone + O2 = 4 benzosemiquinone + 2 H2O. In terms of biological role, lignin degradation and detoxification of lignin-derived products. This chain is Laccase-3 (LAC3), found in Arabidopsis thaliana (Mouse-ear cress).